The primary structure comprises 859 residues: Probable potassium transporter 14 (859 aa).

Positions 1–19 are enriched in gly residues; the sequence is METRSGGSGSASGGGGGGR. Residues 1–69 form a disordered region; it reads METRSGGSGS…SRGGCSDSDD (69 aa). Residues 1 to 112 lie on the Cytoplasmic side of the membrane; it reads METRSGGSGS…RHQEITVGRS (112 aa). The segment covering 54–65 has biased composition (low complexity); the sequence is PAAASGSRGGCS. Residues 113-133 traverse the membrane as a helical segment; sequence IVLAVQTLGVVFGDVGTSPLY. At 134–155 the chain is on the extracellular side; it reads AFDVMFNKYPITSKEDVLGALS. The chain crosses the membrane as a helical span at residues 156–176; it reads LVIYTLILIPLLKYTLIALWG. The Cytoplasmic portion of the chain corresponds to 177–240; that stretch reads NDDGEGGTFA…RLETSSMLKK (64 aa). The chain crosses the membrane as a helical span at residues 241 to 261; sequence LLLMLVLFGTSMVIADGVVTP. Over 262-275 the chain is Extracellular; it reads AMSVMSAVNGLKVG. Residues 276-296 traverse the membrane as a helical segment; that stretch reads ISSVNEGEVVMITVAVLIVLF. Residues 297–305 lie on the Cytoplasmic side of the membrane; that stretch reads TLQRFGSSK. Residues 306-326 form a helical membrane-spanning segment; sequence VALAVGPALFIWFCCLAGIGI. Residues 327–359 are Extracellular-facing; it reads YNMKTYGSAVLQAFNPMYIYYYFERNPTQAWMS. A helical membrane pass occupies residues 360–380; the sequence is LGGCLLCATGSEAMFADLCYF. Residues 381–388 are Cytoplasmic-facing; that stretch reads SVKSVQLT. Residues 389–409 form a helical membrane-spanning segment; sequence FVFLVLPCLLLGYLGQAAFLM. The Extracellular portion of the chain corresponds to 410–417; the sequence is ENLTENQQ. N-linked (GlcNAc...) asparagine glycosylation occurs at N411. A helical transmembrane segment spans residues 418–438; the sequence is VFFLSIPNQAFWPVVFIAILA. The Cytoplasmic segment spans residues 439–478; it reads AIIASRTMTTAIFSTIKQATALGCFPRLKIIHTSRSFMGQ. A helical transmembrane segment spans residues 479-499; it reads IYIPMMNWFLLVSCLAFVTMF. The Extracellular portion of the chain corresponds to 500–508; the sequence is GSINEIGNA. The chain crosses the membrane as a helical span at residues 509–531; it reads YGIAELGVMMMTTVLVTIIMLLI. Topologically, residues 532-535 are cytoplasmic; that stretch reads WQIN. The chain crosses the membrane as a helical span at residues 536–558; the sequence is IIVVLCFLTLSLGLELIFFSSVL. Topologically, residues 559 to 560 are extracellular; sequence GS. The chain crosses the membrane as a helical span at residues 561–581; the sequence is VADGSWVLLVFAAVLYLIMYI. Residues 582–859 are Cytoplasmic-facing; it reads WNYGTKLKYE…MMQVAMQYMV (278 aa). The disordered stretch occupies residues 752–772; it reads GVPPAEAAGTTEHPTIGSSMS. Residues 763 to 772 are compositionally biased toward polar residues; sequence EHPTIGSSMS.

It belongs to the HAK/KUP transporter (TC 2.A.72.3) family.

The protein resides in the membrane. Functionally, high-affinity potassium transporter. The sequence is that of Probable potassium transporter 14 (HAK14) from Oryza sativa subsp. japonica (Rice).